A 369-amino-acid chain; its full sequence is Septin-5 (369 aa).

At Thr-13 the chain carries Phosphothreonine. The 274-residue stretch at 41-314 folds into the Septin-type G domain; it reads KGFDFTLMVA…ENYRAHCIQQ (274 aa). The tract at residues 51-58 is G1 motif; the sequence is GESGLGKS. Residues 51-58, Thr-85, and Gly-111 contribute to the GTP site; that span reads GESGLGKS. The segment at 108–111 is G3 motif; the sequence is DTPG. Omega-N-methylarginine is present on Arg-168. A G4 motif region spans residues 189–192; sequence AKAD. Residue 190–198 coordinates GTP; it reads KADCLVPSE. Phosphoserine is present on Ser-225. Residues Gly-248 and Arg-263 each contribute to the GTP site. Ser-327 is subject to Phosphoserine. A Phosphothreonine modification is found at Thr-336. Positions 338 to 369 form a coiled coil; sequence DSETEKLIRMKDEELRRMQEMLQKMKQRMQDQ.

It belongs to the TRAFAC class TrmE-Era-EngA-EngB-Septin-like GTPase superfamily. Septin GTPase family. Septins polymerize into heterooligomeric protein complexes that form filaments, and can associate with cellular membranes, actin filaments and microtubules. GTPase activity is required for filament formation. Interacts with SEPTIN2 and SEPTIN5. In platelets, associated with a complex containing STX4. Interacts with PRKN; this interaction leads to SEPTIN5 ubiquitination and degradation. Interacts with DYRK1A. Interacts with STX1A; in the cerebellar cortex. In terms of processing, phosphorylated by DYRK1A. In terms of tissue distribution, expressed in brain and testis and at lower level in heart, spleen, lung and kidney.

The protein resides in the cytoplasm. It localises to the cytoskeleton. Functionally, filament-forming cytoskeletal GTPase. May play a role in cytokinesis (Potential). May play a role in platelet secretion. This chain is Septin-5, found in Rattus norvegicus (Rat).